A 371-amino-acid polypeptide reads, in one-letter code: UDP-N-acetylglucosamine--N-acetylmuramyl-(pentapeptide) pyrophosphoryl-undecaprenol N-acetylglucosamine transferase (371 aa).

Residues 15–17 (TGG), N126, R172, S199, I256, 275–280 (ALTVSE), and Q301 contribute to the UDP-N-acetyl-alpha-D-glucosamine site.

Belongs to the glycosyltransferase 28 family. MurG subfamily.

The protein localises to the cell inner membrane. The catalysed reaction is di-trans,octa-cis-undecaprenyl diphospho-N-acetyl-alpha-D-muramoyl-L-alanyl-D-glutamyl-meso-2,6-diaminopimeloyl-D-alanyl-D-alanine + UDP-N-acetyl-alpha-D-glucosamine = di-trans,octa-cis-undecaprenyl diphospho-[N-acetyl-alpha-D-glucosaminyl-(1-&gt;4)]-N-acetyl-alpha-D-muramoyl-L-alanyl-D-glutamyl-meso-2,6-diaminopimeloyl-D-alanyl-D-alanine + UDP + H(+). It functions in the pathway cell wall biogenesis; peptidoglycan biosynthesis. Cell wall formation. Catalyzes the transfer of a GlcNAc subunit on undecaprenyl-pyrophosphoryl-MurNAc-pentapeptide (lipid intermediate I) to form undecaprenyl-pyrophosphoryl-MurNAc-(pentapeptide)GlcNAc (lipid intermediate II). This is UDP-N-acetylglucosamine--N-acetylmuramyl-(pentapeptide) pyrophosphoryl-undecaprenol N-acetylglucosamine transferase from Francisella philomiragia subsp. philomiragia (strain ATCC 25017 / CCUG 19701 / FSC 153 / O#319-036).